The chain runs to 184 residues: ATP synthase subunit b, chloroplastic (184 aa).

Residues 27–49 (LATNPINLSVVLGVLIFFGKGVL) form a helical membrane-spanning segment.

The protein belongs to the ATPase B chain family. F-type ATPases have 2 components, F(1) - the catalytic core - and F(0) - the membrane proton channel. F(1) has five subunits: alpha(3), beta(3), gamma(1), delta(1), epsilon(1). F(0) has four main subunits: a(1), b(1), b'(1) and c(10-14). The alpha and beta chains form an alternating ring which encloses part of the gamma chain. F(1) is attached to F(0) by a central stalk formed by the gamma and epsilon chains, while a peripheral stalk is formed by the delta, b and b' chains.

It localises to the plastid. It is found in the chloroplast thylakoid membrane. Its function is as follows. F(1)F(0) ATP synthase produces ATP from ADP in the presence of a proton or sodium gradient. F-type ATPases consist of two structural domains, F(1) containing the extramembraneous catalytic core and F(0) containing the membrane proton channel, linked together by a central stalk and a peripheral stalk. During catalysis, ATP synthesis in the catalytic domain of F(1) is coupled via a rotary mechanism of the central stalk subunits to proton translocation. Functionally, component of the F(0) channel, it forms part of the peripheral stalk, linking F(1) to F(0). The chain is ATP synthase subunit b, chloroplastic from Chloranthus spicatus (Chulantree).